The following is a 132-amino-acid chain: MVAMFLAVAVVLGLATSPTAEGGKATTEEQKLIEDVNASFRAAMATTANVPPADKYKTFEAAFTVSSKRNLADAVSKAPQLVPKLDEVYNAAYNAADHAAPEDKYEAFVLHFSEALRIIAGTPEVHAVKPGA.

Positions 1–22 (MVAMFLAVAVVLGLATSPTAEG) are cleaved as a signal peptide.

It belongs to the Poa p IX/Phl p VI allergen family.

The sequence is that of Pollen allergen Phl p 6 (PHLPVI) from Phleum pratense (Common timothy).